The sequence spans 692 residues: Elongation factor G (692 aa).

The tr-type G domain maps to 8–283 (DHVRNIGIMA…AVVDYFPSPS (276 aa)). GTP contacts are provided by residues 17–24 (AHIDAGKT), 81–85 (DTPGH), and 135–138 (NKMD).

Belongs to the TRAFAC class translation factor GTPase superfamily. Classic translation factor GTPase family. EF-G/EF-2 subfamily.

Its subcellular location is the cytoplasm. Its function is as follows. Catalyzes the GTP-dependent ribosomal translocation step during translation elongation. During this step, the ribosome changes from the pre-translocational (PRE) to the post-translocational (POST) state as the newly formed A-site-bound peptidyl-tRNA and P-site-bound deacylated tRNA move to the P and E sites, respectively. Catalyzes the coordinated movement of the two tRNA molecules, the mRNA and conformational changes in the ribosome. This Magnetococcus marinus (strain ATCC BAA-1437 / JCM 17883 / MC-1) protein is Elongation factor G.